The following is a 95-amino-acid chain: Aspartyl/glutamyl-tRNA(Asn/Gln) amidotransferase subunit C (95 aa).

This sequence belongs to the GatC family. In terms of assembly, heterotrimer of A, B and C subunits.

It carries out the reaction L-glutamyl-tRNA(Gln) + L-glutamine + ATP + H2O = L-glutaminyl-tRNA(Gln) + L-glutamate + ADP + phosphate + H(+). It catalyses the reaction L-aspartyl-tRNA(Asn) + L-glutamine + ATP + H2O = L-asparaginyl-tRNA(Asn) + L-glutamate + ADP + phosphate + 2 H(+). In terms of biological role, allows the formation of correctly charged Asn-tRNA(Asn) or Gln-tRNA(Gln) through the transamidation of misacylated Asp-tRNA(Asn) or Glu-tRNA(Gln) in organisms which lack either or both of asparaginyl-tRNA or glutaminyl-tRNA synthetases. The reaction takes place in the presence of glutamine and ATP through an activated phospho-Asp-tRNA(Asn) or phospho-Glu-tRNA(Gln). The sequence is that of Aspartyl/glutamyl-tRNA(Asn/Gln) amidotransferase subunit C from Methylorubrum populi (strain ATCC BAA-705 / NCIMB 13946 / BJ001) (Methylobacterium populi).